Consider the following 630-residue polypeptide: 1-deoxy-D-xylulose-5-phosphate synthase (630 aa).

Thiamine diphosphate is bound by residues His-75 and 116-118; that span reads GHS. Asp-147 is a binding site for Mg(2+). Thiamine diphosphate is bound by residues 148–149, Asn-176, Tyr-287, and Glu-367; that span reads GA. Asn-176 contributes to the Mg(2+) binding site.

Belongs to the transketolase family. DXPS subfamily. In terms of assembly, homodimer. Mg(2+) serves as cofactor. The cofactor is thiamine diphosphate.

It carries out the reaction D-glyceraldehyde 3-phosphate + pyruvate + H(+) = 1-deoxy-D-xylulose 5-phosphate + CO2. It participates in metabolic intermediate biosynthesis; 1-deoxy-D-xylulose 5-phosphate biosynthesis; 1-deoxy-D-xylulose 5-phosphate from D-glyceraldehyde 3-phosphate and pyruvate: step 1/1. In terms of biological role, catalyzes the acyloin condensation reaction between C atoms 2 and 3 of pyruvate and glyceraldehyde 3-phosphate to yield 1-deoxy-D-xylulose-5-phosphate (DXP). The chain is 1-deoxy-D-xylulose-5-phosphate synthase from Treponema pallidum (strain Nichols).